The sequence spans 366 residues: 15-cis-zeta-carotene isomerase, chloroplastic (366 aa).

Residues 1–45 (MASQLRLHLAATPPLLPHRRPHLARPLCPTLNPIRAPLPPLSRVL) constitute a chloroplast transit peptide. 6 helical membrane passes run 94–114 (SWAY…VLWI), 136–156 (EVVM…MASL), 171–191 (VLFA…FINH), 203–223 (GITG…FFLY), 260–280 (VIWC…AASV), and 338–358 (LPYV…PLMQ).

Expressed in leaves and roots, and at lower levels in embryos and endosperm.

The protein localises to the plastid. The protein resides in the chloroplast membrane. It catalyses the reaction 9,9',15-tri-cis-zeta-carotene = 9,9'-di-cis-zeta-carotene. Functionally, isomerase involved in the biosynthesis of carotenoids. Catalyzes the cis- to trans-conversion of the 15-cis-bond in 9,15,9'-tri-cis-zeta-carotene. The chain is 15-cis-zeta-carotene isomerase, chloroplastic from Zea mays (Maize).